The sequence spans 199 residues: Holliday junction branch migration complex subunit RuvA (199 aa).

The tract at residues methionine 1 to alanine 64 is domain I. Residues arginine 65–proline 143 form a domain II region. The tract at residues alanine 144 to serine 146 is flexible linker. The tract at residues alanine 147–lysine 199 is domain III.

Belongs to the RuvA family. In terms of assembly, homotetramer. Forms an RuvA(8)-RuvB(12)-Holliday junction (HJ) complex. HJ DNA is sandwiched between 2 RuvA tetramers; dsDNA enters through RuvA and exits via RuvB. An RuvB hexamer assembles on each DNA strand where it exits the tetramer. Each RuvB hexamer is contacted by two RuvA subunits (via domain III) on 2 adjacent RuvB subunits; this complex drives branch migration. In the full resolvosome a probable DNA-RuvA(4)-RuvB(12)-RuvC(2) complex forms which resolves the HJ.

Its subcellular location is the cytoplasm. Functionally, the RuvA-RuvB-RuvC complex processes Holliday junction (HJ) DNA during genetic recombination and DNA repair, while the RuvA-RuvB complex plays an important role in the rescue of blocked DNA replication forks via replication fork reversal (RFR). RuvA specifically binds to HJ cruciform DNA, conferring on it an open structure. The RuvB hexamer acts as an ATP-dependent pump, pulling dsDNA into and through the RuvAB complex. HJ branch migration allows RuvC to scan DNA until it finds its consensus sequence, where it cleaves and resolves the cruciform DNA. The sequence is that of Holliday junction branch migration complex subunit RuvA from Sphingopyxis alaskensis (strain DSM 13593 / LMG 18877 / RB2256) (Sphingomonas alaskensis).